The chain runs to 495 residues: Lysine--tRNA ligase (495 aa).

Glutamate 406 and glutamate 413 together coordinate Mg(2+).

Belongs to the class-II aminoacyl-tRNA synthetase family. In terms of assembly, homodimer. Mg(2+) is required as a cofactor.

It localises to the cytoplasm. It carries out the reaction tRNA(Lys) + L-lysine + ATP = L-lysyl-tRNA(Lys) + AMP + diphosphate. This is Lysine--tRNA ligase from Leptospira borgpetersenii serovar Hardjo-bovis (strain JB197).